A 361-amino-acid chain; its full sequence is MNSETGALRRGWTTGTCASAAARAAFEALLGIEPEDPVPVTLPSGARPTFALARLDRGSGFVRAGIVKDAGDDPDVTHGALVLATLRFGAPATGIVFRAGPGVGIVTKPGLPLPPGEPAINAMPRRMIRTALTEVAEANGVTCDLVVEVGIEDGERIAERTMNRRLGIIGGLSILGTTGVVVPYSCAAWIASIHRGIDVARAEGLTHLAGATGATSEAAIRNLYGLPEQALIDMGDFVGGMLKYIRGHPVARVTIAGGFAKMTKLAQGRLDLHSKREAIDFRWLAELYCSIGGKAESGMSVRTANTALEVLQMAQAEHVPIAPAIARSACRVAAGALARADIALDVAIFDRDGCLIASERC.

Belongs to the CbiD family.

It carries out the reaction Co-precorrin-5B + S-adenosyl-L-methionine = Co-precorrin-6A + S-adenosyl-L-homocysteine. The protein operates within cofactor biosynthesis; adenosylcobalamin biosynthesis; cob(II)yrinate a,c-diamide from sirohydrochlorin (anaerobic route): step 6/10. Catalyzes the methylation of C-1 in cobalt-precorrin-5B to form cobalt-precorrin-6A. The polypeptide is Cobalt-precorrin-5B C(1)-methyltransferase (Methylorubrum extorquens (strain CM4 / NCIMB 13688) (Methylobacterium extorquens)).